The following is a 365-amino-acid chain: Peptide chain release factor 2 (365 aa).

An N5-methylglutamine modification is found at Gln252.

Belongs to the prokaryotic/mitochondrial release factor family. Post-translationally, methylated by PrmC. Methylation increases the termination efficiency of RF2.

It is found in the cytoplasm. Functionally, peptide chain release factor 2 directs the termination of translation in response to the peptide chain termination codons UGA and UAA. This is Peptide chain release factor 2 from Proteus mirabilis (strain HI4320).